A 342-amino-acid polypeptide reads, in one-letter code: tRNA N6-adenosine threonylcarbamoyltransferase (342 aa).

Fe cation contacts are provided by His120 and His124. Residues 142–146 (VVSGG), Asp175, Gly188, Asp192, and Asn281 each bind substrate. Asp310 lines the Fe cation pocket.

Belongs to the KAE1 / TsaD family. Fe(2+) is required as a cofactor.

Its subcellular location is the cytoplasm. It carries out the reaction L-threonylcarbamoyladenylate + adenosine(37) in tRNA = N(6)-L-threonylcarbamoyladenosine(37) in tRNA + AMP + H(+). Required for the formation of a threonylcarbamoyl group on adenosine at position 37 (t(6)A37) in tRNAs that read codons beginning with adenine. Is involved in the transfer of the threonylcarbamoyl moiety of threonylcarbamoyl-AMP (TC-AMP) to the N6 group of A37, together with TsaE and TsaB. TsaD likely plays a direct catalytic role in this reaction. In Geobacillus thermodenitrificans (strain NG80-2), this protein is tRNA N6-adenosine threonylcarbamoyltransferase.